Consider the following 279-residue polypeptide: 3-methyl-2-oxobutanoate hydroxymethyltransferase (279 aa).

Mg(2+)-binding residues include aspartate 44 and aspartate 83. 3-methyl-2-oxobutanoate-binding positions include 44–45, aspartate 83, and lysine 112; that span reads DS. Residue glutamate 114 participates in Mg(2+) binding. The Proton acceptor role is filled by glutamate 180.

The protein belongs to the PanB family. In terms of assembly, homodecamer; pentamer of dimers. Requires Mg(2+) as cofactor.

It is found in the cytoplasm. The catalysed reaction is 3-methyl-2-oxobutanoate + (6R)-5,10-methylene-5,6,7,8-tetrahydrofolate + H2O = 2-dehydropantoate + (6S)-5,6,7,8-tetrahydrofolate. Its pathway is cofactor biosynthesis; (R)-pantothenate biosynthesis; (R)-pantoate from 3-methyl-2-oxobutanoate: step 1/2. Functionally, catalyzes the reversible reaction in which hydroxymethyl group from 5,10-methylenetetrahydrofolate is transferred onto alpha-ketoisovalerate to form ketopantoate. The polypeptide is 3-methyl-2-oxobutanoate hydroxymethyltransferase (Chloroflexus aggregans (strain MD-66 / DSM 9485)).